We begin with the raw amino-acid sequence, 445 residues long: UDP-N-acetylmuramoylalanine--D-glutamate ligase (445 aa).

126–132 lines the ATP pocket; it reads GTSGKTT.

The protein belongs to the MurCDEF family.

The protein localises to the cytoplasm. The enzyme catalyses UDP-N-acetyl-alpha-D-muramoyl-L-alanine + D-glutamate + ATP = UDP-N-acetyl-alpha-D-muramoyl-L-alanyl-D-glutamate + ADP + phosphate + H(+). The protein operates within cell wall biogenesis; peptidoglycan biosynthesis. In terms of biological role, cell wall formation. Catalyzes the addition of glutamate to the nucleotide precursor UDP-N-acetylmuramoyl-L-alanine (UMA). The polypeptide is UDP-N-acetylmuramoylalanine--D-glutamate ligase (Nitratidesulfovibrio vulgaris (strain DSM 19637 / Miyazaki F) (Desulfovibrio vulgaris)).